The following is a 320-amino-acid chain: Ribosomal RNA small subunit methyltransferase H (320 aa).

S-adenosyl-L-methionine-binding positions include 42 to 44, Asp-62, Phe-86, Asp-108, and Gln-115; that span reads GGH.

This sequence belongs to the methyltransferase superfamily. RsmH family.

It is found in the cytoplasm. The enzyme catalyses cytidine(1402) in 16S rRNA + S-adenosyl-L-methionine = N(4)-methylcytidine(1402) in 16S rRNA + S-adenosyl-L-homocysteine + H(+). In terms of biological role, specifically methylates the N4 position of cytidine in position 1402 (C1402) of 16S rRNA. This Yersinia enterocolitica serotype O:8 / biotype 1B (strain NCTC 13174 / 8081) protein is Ribosomal RNA small subunit methyltransferase H.